An 81-amino-acid polypeptide reads, in one-letter code: Large ribosomal subunit protein bL27 (81 aa).

Residues 1 to 11 (MATSKSGGSSK) show a composition bias toward polar residues. A disordered region spans residues 1–20 (MATSKSGGSSKNGRDSISKR).

The protein belongs to the bacterial ribosomal protein bL27 family.

The polypeptide is Large ribosomal subunit protein bL27 (Borreliella afzelii (strain PKo) (Borrelia afzelii)).